Reading from the N-terminus, the 335-residue chain is Glyceraldehyde-3-phosphate dehydrogenase 2 (335 aa).

NAD(+)-binding positions include 13 to 14 (RI), Asp-35, and Arg-80. Phosphoserine is present on residues Ser-125 and Ser-151. 151 to 153 (SCT) contributes to the D-glyceraldehyde 3-phosphate binding site. Cys-152 functions as the Nucleophile in the catalytic mechanism. Phosphothreonine is present on residues Thr-153, Thr-154, Thr-182, and Thr-184. Residue Thr-182 participates in D-glyceraldehyde 3-phosphate binding. 3 positions are modified to phosphoserine: Ser-192, Ser-203, and Ser-209. Thr-211 carries the post-translational modification Phosphothreonine. Residues 211-212 (TG) and Arg-234 contribute to the D-glyceraldehyde 3-phosphate site. A Phosphothreonine modification is found at Thr-237. A Phosphoserine modification is found at Ser-241. Asn-316 lines the NAD(+) pocket.

Belongs to the glyceraldehyde-3-phosphate dehydrogenase family. Homotetramer.

The protein localises to the cytoplasm. The catalysed reaction is D-glyceraldehyde 3-phosphate + phosphate + NAD(+) = (2R)-3-phospho-glyceroyl phosphate + NADH + H(+). Its pathway is carbohydrate degradation; glycolysis; pyruvate from D-glyceraldehyde 3-phosphate: step 1/5. The sequence is that of Glyceraldehyde-3-phosphate dehydrogenase 2 (gpd3) from Schizosaccharomyces pombe (strain 972 / ATCC 24843) (Fission yeast).